We begin with the raw amino-acid sequence, 126 residues long: Histone H2B type 1-J (126 aa).

Residues 1–12 (MPEPAKSAPAPK) show a composition bias toward low complexity. The interval 1–35 (MPEPAKSAPAPKKGSKKAVTKAQKKDGKKRKRSRK) is disordered. Pro-2 is modified (N-acetylproline). Glu-3 carries the post-translational modification ADP-ribosyl glutamic acid. An N6-(2-hydroxyisobutyryl)lysine; alternate modification is found at Lys-6. N6-(beta-hydroxybutyryl)lysine; alternate is present on Lys-6. At Lys-6 the chain carries N6-acetyllysine; alternate. At Lys-6 the chain carries N6-butyryllysine; alternate. The residue at position 6 (Lys-6) is an N6-crotonyllysine; alternate. Lys-6 carries the post-translational modification N6-lactoyllysine; alternate. Lys-6 is covalently cross-linked (Glycyl lysine isopeptide (Lys-Gly) (interchain with G-Cter in SUMO2); alternate). Residue Ser-7 is modified to ADP-ribosylserine. Lys-12 is modified (N6-(beta-hydroxybutyryl)lysine; alternate). N6-acetyllysine; alternate occurs at positions 12 and 13. Lys-12 and Lys-13 each carry N6-crotonyllysine; alternate. Lys-12 carries the post-translational modification N6-lactoyllysine; alternate. Lys-13 bears the N6-(2-hydroxyisobutyryl)lysine; alternate mark. Ser-15 is subject to Phosphoserine; by STK4/MST1. N6-acetyllysine; alternate is present on residues Lys-16, Lys-17, Lys-21, and Lys-24. N6-crotonyllysine; alternate occurs at positions 16, 17, 21, and 24. An N6-lactoyllysine; alternate mark is found at Lys-16, Lys-17, Lys-21, and Lys-24. Lys-17 and Lys-21 each carry N6-(beta-hydroxybutyryl)lysine; alternate. Lys-17 carries the N6-glutaryllysine; alternate modification. 2 positions are modified to N6-(2-hydroxyisobutyryl)lysine; alternate: Lys-21 and Lys-24. Lys-21 carries the post-translational modification N6-butyryllysine; alternate. Lys-21 is covalently cross-linked (Glycyl lysine isopeptide (Lys-Gly) (interchain with G-Cter in SUMO2); alternate). The residue at position 25 (Lys-25) is an N6-(2-hydroxyisobutyryl)lysine. Lys-35 carries the N6-(2-hydroxyisobutyryl)lysine; alternate modification. At Lys-35 the chain carries N6-(beta-hydroxybutyryl)lysine; alternate. Residue Lys-35 is modified to N6-crotonyllysine; alternate. The residue at position 35 (Lys-35) is an N6-glutaryllysine; alternate. The residue at position 35 (Lys-35) is an N6-succinyllysine; alternate. Lys-35 participates in a covalent cross-link: Glycyl lysine isopeptide (Lys-Gly) (interchain with G-Cter in ubiquitin); alternate. Residue Glu-36 is modified to PolyADP-ribosyl glutamic acid. Ser-37 bears the Phosphoserine; by AMPK mark. 3 positions are modified to N6-(2-hydroxyisobutyryl)lysine; alternate: Lys-44, Lys-47, and Lys-58. The residue at position 44 (Lys-44) is an N6-lactoyllysine; alternate. Lys-44 and Lys-47 each carry N6-glutaryllysine; alternate. Lys-47 is subject to N6-methyllysine; alternate. Residue Lys-58 is modified to N6,N6-dimethyllysine; alternate. Arg-80 carries the post-translational modification Dimethylated arginine. Lys-86 is modified (N6-(2-hydroxyisobutyryl)lysine; alternate). Lys-86 bears the N6-(beta-hydroxybutyryl)lysine; alternate mark. Lys-86 carries the post-translational modification N6-acetyllysine; alternate. Lys-86 carries the N6-lactoyllysine; alternate modification. Residue Lys-86 is modified to N6,N6,N6-trimethyllysine; alternate. Omega-N-methylarginine occurs at positions 87 and 93. Lys-109 bears the N6-(2-hydroxyisobutyryl)lysine; alternate mark. N6-lactoyllysine; alternate is present on Lys-109. Residue Lys-109 is modified to N6-glutaryllysine; alternate. Position 109 is an N6-methyllysine; alternate (Lys-109). A glycan (O-linked (GlcNAc) serine) is linked at Ser-113. Thr-116 is modified (phosphothreonine). N6-(2-hydroxyisobutyryl)lysine; alternate occurs at positions 117 and 121. N6-(beta-hydroxybutyryl)lysine; alternate is present on residues Lys-117 and Lys-121. Residues Lys-117 and Lys-121 each carry the N6-lactoyllysine; alternate modification. 2 positions are modified to N6-glutaryllysine; alternate: Lys-117 and Lys-121. Residues Lys-117 and Lys-121 each carry the N6-succinyllysine; alternate modification. N6-malonyllysine; alternate is present on Lys-117. Lys-117 is modified (N6-methylated lysine; alternate). Residue Lys-121 forms a Glycyl lysine isopeptide (Lys-Gly) (interchain with G-Cter in ubiquitin); alternate linkage.

This sequence belongs to the histone H2B family. As to quaternary structure, the nucleosome is a histone octamer containing two molecules each of H2A, H2B, H3 and H4 assembled in one H3-H4 heterotetramer and two H2A-H2B heterodimers. The octamer wraps approximately 147 bp of DNA. Heterodimer H2BC11 and H2AZ1 interacts with VPS72 (via N-terminal domain). Post-translationally, monoubiquitination at Lys-35 (H2BK34Ub) by the MSL1/MSL2 dimer is required for histone H3 'Lys-4' (H3K4me) and 'Lys-79' (H3K79me) methylation and transcription activation at specific gene loci, such as HOXA9 and MEIS1 loci. Similarly, monoubiquitination at Lys-121 (H2BK120Ub) by the RNF20/40 complex gives a specific tag for epigenetic transcriptional activation and is also prerequisite for histone H3 'Lys-4' and 'Lys-79' methylation. It also functions cooperatively with the FACT dimer to stimulate elongation by RNA polymerase II. H2BK120Ub also acts as a regulator of mRNA splicing: deubiquitination by USP49 is required for efficient cotranscriptional splicing of a large set of exons. In terms of processing, phosphorylation at Ser-37 (H2BS36ph) by AMPK in response to stress promotes transcription. Phosphorylated on Ser-15 (H2BS14ph) by STK4/MST1 during apoptosis; which facilitates apoptotic chromatin condensation. Also phosphorylated on Ser-15 in response to DNA double strand breaks (DSBs), and in correlation with somatic hypermutation and immunoglobulin class-switch recombination. GlcNAcylation at Ser-113 promotes monoubiquitination of Lys-121. It fluctuates in response to extracellular glucose, and associates with transcribed genes. Post-translationally, ADP-ribosylated by PARP1 or PARP2 on Ser-7 (H2BS6ADPr) in response to DNA damage. H2BS6ADPr promotes recruitment of CHD1L. Mono-ADP-ribosylated on Glu-3 (H2BE2ADPr) by PARP3 in response to single-strand breaks. Poly ADP-ribosylation on Glu-36 (H2BE35ADPr) by PARP1 regulates adipogenesis: it inhibits phosphorylation at Ser-37 (H2BS36ph), thereby blocking expression of pro-adipogenetic genes. In terms of processing, crotonylation (Kcr) is specifically present in male germ cells and marks testis-specific genes in post-meiotic cells, including X-linked genes that escape sex chromosome inactivation in haploid cells. Crotonylation marks active promoters and enhancers and confers resistance to transcriptional repressors. It is also associated with post-meiotically activated genes on autosomes. Lactylated in macrophages by EP300/P300 by using lactoyl-CoA directly derived from endogenous or exogenous lactate, leading to stimulates gene transcription.

Its subcellular location is the nucleus. The protein resides in the chromosome. In terms of biological role, core component of nucleosome. Nucleosomes wrap and compact DNA into chromatin, limiting DNA accessibility to the cellular machineries which require DNA as a template. Histones thereby play a central role in transcription regulation, DNA repair, DNA replication and chromosomal stability. DNA accessibility is regulated via a complex set of post-translational modifications of histones, also called histone code, and nucleosome remodeling. Its function is as follows. Has broad antibacterial activity. May contribute to the formation of the functional antimicrobial barrier of the colonic epithelium, and to the bactericidal activity of amniotic fluid. The chain is Histone H2B type 1-J from Homo sapiens (Human).